Consider the following 151-residue polypeptide: Large ribosomal subunit protein bL9 (151 aa).

The protein belongs to the bacterial ribosomal protein bL9 family.

Its function is as follows. Binds to the 23S rRNA. This is Large ribosomal subunit protein bL9 from Thermosipho melanesiensis (strain DSM 12029 / CIP 104789 / BI429).